A 601-amino-acid chain; its full sequence is Sodium-dependent phosphate transport protein 2C (601 aa).

The Cytoplasmic portion of the chain corresponds to 1-75 (MPNSLAGGQV…RRVVSSFLKA (75 aa)). At Ser-4 the chain carries Phosphoserine. The helical transmembrane segment at 76–96 (CGLLGSLYFFICSLDILSSAF) threads the bilayer. At 97 to 110 (QLLGSKMAGDIFKD) the chain is on the extracellular side. The helical transmembrane segment at 111–131 (NVVLSNPVAGLVIGVLVTVLV) threads the bilayer. Residues 132-187 (QSSSTSSSIVVSMVASKLLTVQVSVPIIMGVNVGTSITSTLVSMAQSGDRDEFQRA) are Cytoplasmic-facing. A helical membrane pass occupies residues 188 to 208 (FSGSAVHGIFNWLTVLVLLPL). The Extracellular portion of the chain corresponds to 209–324 (ESATAALERL…FAGSKLTDLA (116 aa)). Asn-264, Asn-267, and Asn-299 each carry an N-linked (GlcNAc...) asparagine glycan. Cys-275 and Cys-311 form a disulfide bridge. The helical transmembrane segment at 325–345 (VGFILLAGSLLVLCVCLVLIV) threads the bilayer. Residues 346–369 (KLLNSVLKGRIAQAVKTVINADFP) lie on the Cytoplasmic side of the membrane. Residues 370–390 (FPFGWLSGYLAILVGAGLTFL) form a helical membrane-spanning segment. At 391–441 (LQSSSVFTAAIVPLMGVGVIDLERAYPLFLGSNIGTTTTALLAALASPADM) the chain is on the extracellular side. A helical membrane pass occupies residues 442–462 (LIFAVQVALIHFFFNLAGILL). At 463 to 487 (WYLVPVLRLPIPLAKRFGNLTAQYR) the chain is on the cytoplasmic side. A helical membrane pass occupies residues 488–508 (WVAIVYLLLTFLLLPLAAFGL). Topologically, residues 509 to 512 (SLAG) are extracellular. A helical transmembrane segment spans residues 513-533 (GTVLAAVGGPLVGLVLLIILV). Topologically, residues 534-601 (NVLQQHRPSW…NPQVIASQQL (68 aa)) are cytoplasmic.

It belongs to the SLC34A transporter family. Expressed only in the kidney.

Its subcellular location is the apical cell membrane. It carries out the reaction 2 Na(+)(out) + phosphate(out) = 2 Na(+)(in) + phosphate(in). Its function is as follows. Involved in actively transporting phosphate into cells via Na(+) cotransport in the renal brush border membrane. The cotransport has a Na(+):Pi stoichiometry of 2:1 and is electroneutral. This is Sodium-dependent phosphate transport protein 2C (Slc34a3) from Mus musculus (Mouse).